The chain runs to 125 residues: Lymphocyte antigen 6 complex locus protein G6c (125 aa).

An N-terminal signal peptide occupies residues 1–18 (MKALMLLTLSVLLCWVSA). The UPAR/Ly6 domain maps to 20-111 (IRCHSCYKVP…PRPTPALGLV (92 aa)). Disulfide bonds link cysteine 22/cysteine 47, cysteine 25/cysteine 33, and cysteine 39/cysteine 65. N-linked (GlcNAc...) asparagine glycosylation occurs at asparagine 88. An intrachain disulfide couples cysteine 92 to cysteine 97. Serine 99 carries GPI-anchor amidated serine lipidation. Residues 100–125 (AGPRPTPALGLVFLTSLAGLGLWLLH) constitute a propeptide, removed in mature form.

As to quaternary structure, monomer. In terms of processing, N-glycosylated. In terms of tissue distribution, highly expressed at the leading edges of cells, on filopodia.

It localises to the cell membrane. The sequence is that of Lymphocyte antigen 6 complex locus protein G6c (LY6G6C) from Homo sapiens (Human).